Here is a 139-residue protein sequence, read N- to C-terminus: Oocyte zinc finger protein XlCOF14 (139 aa).

5 consecutive C2H2-type zinc fingers follow at residues 6–28 (FICS…SNVH), 33–55 (FPCT…QKIH), 61–83 (HKCT…HLSH), 89–111 (FSCF…QLSH), and 117–139 (FVCS…CHIH).

The protein belongs to the krueppel C2H2-type zinc-finger protein family.

The protein localises to the nucleus. Its function is as follows. May be involved in transcriptional regulation. The polypeptide is Oocyte zinc finger protein XlCOF14 (Xenopus laevis (African clawed frog)).